The primary structure comprises 136 residues: ATP synthase epsilon chain (136 aa).

It belongs to the ATPase epsilon chain family. In terms of assembly, F-type ATPases have 2 components, CF(1) - the catalytic core - and CF(0) - the membrane proton channel. CF(1) has five subunits: alpha(3), beta(3), gamma(1), delta(1), epsilon(1). CF(0) has three main subunits: a, b and c.

It is found in the cell membrane. Its function is as follows. Produces ATP from ADP in the presence of a proton gradient across the membrane. In Ureaplasma parvum serovar 3 (strain ATCC 27815 / 27 / NCTC 11736), this protein is ATP synthase epsilon chain.